Here is a 203-residue protein sequence, read N- to C-terminus: A-type ATP synthase subunit E (203 aa).

The protein belongs to the V-ATPase E subunit family. In terms of assembly, might form a homodimer. Interacts with subunit H via residues 41-60. The A-type ATPase is composed of subunits A(3), B(3), C, D, E(1 or 2), F, H(2), I and K(x).

It is found in the cell membrane. Functionally, component of the A-type ATP synthase that produces ATP from ADP in the presence of a proton gradient across the membrane. The sequence is that of A-type ATP synthase subunit E from Methanocaldococcus jannaschii (strain ATCC 43067 / DSM 2661 / JAL-1 / JCM 10045 / NBRC 100440) (Methanococcus jannaschii).